Reading from the N-terminus, the 64-residue chain is Potassium channel toxin alpha-KTx J123 (64 aa).

The signal sequence occupies residues 1-21 (MNKVYLVAVLVLFLALTINES). Intrachain disulfides connect cysteine 30-cysteine 52, cysteine 37-cysteine 60, and cysteine 41-cysteine 62.

The protein belongs to the short scorpion toxin superfamily. Potassium channel inhibitor family. Alpha-KTx 11 subfamily. In terms of tissue distribution, expressed by the venom gland.

Its subcellular location is the secreted. This recombinant toxin inhibits mammalian voltage-gated potassium channels Kv1.3/KCNA3 (IC(50)=0.79 nM) and Kv1.2/KCNA2 (IC(50)=26.4 nM). In Olivierus martensii (Manchurian scorpion), this protein is Potassium channel toxin alpha-KTx J123.